We begin with the raw amino-acid sequence, 176 residues long: UPF0098 protein Rv2140c (176 aa).

Thr2 carries the post-translational modification N-acetylthreonine.

Belongs to the UPF0098 family.

This chain is UPF0098 protein Rv2140c, found in Mycobacterium tuberculosis (strain ATCC 25618 / H37Rv).